The primary structure comprises 607 residues: Elongation factor 4 (607 aa).

A tr-type G domain is found at 11–193; it reads ENIRNFSIIA…KIVEVVPAPD (183 aa). Residues 23–28 and 140–143 contribute to the GTP site; these read DHGKST and NKID.

It belongs to the TRAFAC class translation factor GTPase superfamily. Classic translation factor GTPase family. LepA subfamily.

It is found in the cell membrane. It carries out the reaction GTP + H2O = GDP + phosphate + H(+). Its function is as follows. Required for accurate and efficient protein synthesis under certain stress conditions. May act as a fidelity factor of the translation reaction, by catalyzing a one-codon backward translocation of tRNAs on improperly translocated ribosomes. Back-translocation proceeds from a post-translocation (POST) complex to a pre-translocation (PRE) complex, thus giving elongation factor G a second chance to translocate the tRNAs correctly. Binds to ribosomes in a GTP-dependent manner. This Staphylococcus aureus (strain N315) protein is Elongation factor 4.